A 226-amino-acid polypeptide reads, in one-letter code: Ribonuclease 3 (226 aa).

The region spanning 2–129 (IESISKIIKY…LIGAIYLDGG (128 aa)) is the RNase III domain. E42 is a Mg(2+) binding site. D46 is an active-site residue. Positions 115 and 118 each coordinate Mg(2+). E118 is an active-site residue. One can recognise a DRBM domain in the interval 154–223 (DAKTILQELV…ASLMLNQIHN (70 aa)).

The protein belongs to the ribonuclease III family. As to quaternary structure, homodimer. Mg(2+) is required as a cofactor.

It is found in the cytoplasm. It catalyses the reaction Endonucleolytic cleavage to 5'-phosphomonoester.. Functionally, digests double-stranded RNA. Involved in the processing of primary rRNA transcript to yield the immediate precursors to the large and small rRNAs (23S and 16S). Processes some mRNAs, and tRNAs when they are encoded in the rRNA operon. Processes pre-crRNA and tracrRNA of type II CRISPR loci if present in the organism. The chain is Ribonuclease 3 from Ehrlichia chaffeensis (strain ATCC CRL-10679 / Arkansas).